Consider the following 287-residue polypeptide: 4-hydroxybenzoate octaprenyltransferase (287 aa).

6 helical membrane-spanning segments follow: residues 41–61 (WPLL…GCAM), 89–109 (WEAI…ILPL), 133–153 (FFAI…PMAF), 158–178 (DTVP…SVAY), 202–224 (FGRF…YVWI), and 267–287 (NNWL…LAGS).

It belongs to the UbiA prenyltransferase family. Mg(2+) is required as a cofactor.

It is found in the cell inner membrane. The enzyme catalyses all-trans-octaprenyl diphosphate + 4-hydroxybenzoate = 4-hydroxy-3-(all-trans-octaprenyl)benzoate + diphosphate. Its pathway is cofactor biosynthesis; ubiquinone biosynthesis. In terms of biological role, catalyzes the prenylation of para-hydroxybenzoate (PHB) with an all-trans polyprenyl group. Mediates the second step in the final reaction sequence of ubiquinone-8 (UQ-8) biosynthesis, which is the condensation of the polyisoprenoid side chain with PHB, generating the first membrane-bound Q intermediate 3-octaprenyl-4-hydroxybenzoate. This chain is 4-hydroxybenzoate octaprenyltransferase, found in Burkholderia lata (strain ATCC 17760 / DSM 23089 / LMG 22485 / NCIMB 9086 / R18194 / 383).